The following is a 308-amino-acid chain: Ornithine carbamoyltransferase (308 aa).

Carbamoyl phosphate contacts are provided by residues 52-55, glutamine 79, arginine 103, and 130-133; these read STRT and HPLQ. Residues asparagine 162, aspartate 224, and 228–229 contribute to the L-ornithine site; that span reads SM. Residues 264-265 and arginine 292 each bind carbamoyl phosphate; that span reads CL.

Belongs to the aspartate/ornithine carbamoyltransferase superfamily. OTCase family.

It localises to the cytoplasm. It carries out the reaction carbamoyl phosphate + L-ornithine = L-citrulline + phosphate + H(+). Its pathway is amino-acid biosynthesis; L-arginine biosynthesis; L-arginine from L-ornithine and carbamoyl phosphate: step 1/3. Its function is as follows. Reversibly catalyzes the transfer of the carbamoyl group from carbamoyl phosphate (CP) to the N(epsilon) atom of ornithine (ORN) to produce L-citrulline. The polypeptide is Ornithine carbamoyltransferase (Pyrobaculum calidifontis (strain DSM 21063 / JCM 11548 / VA1)).